The chain runs to 132 residues: Acid shock protein (132 aa).

Residues 1 to 21 (MKKVLALVVAAAMGLSSAAFA) form the signal peptide. Over residues 20-45 (FAAETTTSSAAPATATATTTKAAPAK) the composition is skewed to low complexity. The tract at residues 20 to 132 (FAAETTTSSA…AAKPAAQPAA (113 aa)) is disordered. The propeptide occupies 22–90 (AETTTSSAAP…TTAPVEQKAQ (69 aa)). Over residues 62–71 (AAKKHHKKAV) the composition is skewed to basic residues. Composition is skewed to low complexity over residues 76 to 90 (AAPATTTAPVEQKAQ) and 100 to 109 (AKPAVAQKAQ). The span at 110–119 (AAKKHHKKAV) shows a compositional bias: basic residues.

It belongs to the Asr family. Post-translationally, proteolytic processing gives rise to the active protein.

The protein resides in the periplasm. Its function is as follows. Required for growth and/or survival at acidic conditions. This chain is Acid shock protein, found in Enterobacter sp. (strain 638).